The following is a 453-amino-acid chain: Succinate-semialdehyde dehydrogenase (acetylating) (453 aa).

Residue 188 to 193 coordinates NADP(+); the sequence is ATGGAG. Cysteine 242 is an active-site residue.

In terms of assembly, homodimer.

It carries out the reaction succinate semialdehyde + NADP(+) + CoA = succinyl-CoA + NADPH + H(+). Catalyzes the reduction of succinate semialdehyde to succinyl-CoA. The enzyme is specific for succinate semialdehyde and succinyl-CoA, and only shows low activity with palmitoyl-CoA. There is no activity with NAD(+) as cosubstrate. The chain is Succinate-semialdehyde dehydrogenase (acetylating) (sucD) from Clostridium kluyveri (strain ATCC 8527 / DSM 555 / NBRC 12016 / NCIMB 10680 / K1).